Here is a 154-residue protein sequence, read N- to C-terminus: Putative pre-16S rRNA nuclease (154 aa).

The protein belongs to the YqgF nuclease family.

Its subcellular location is the cytoplasm. Its function is as follows. Could be a nuclease involved in processing of the 5'-end of pre-16S rRNA. The chain is Putative pre-16S rRNA nuclease from Gluconacetobacter diazotrophicus (strain ATCC 49037 / DSM 5601 / CCUG 37298 / CIP 103539 / LMG 7603 / PAl5).